An 87-amino-acid chain; its full sequence is Acyl-CoA-binding protein (87 aa).

S2 is subject to N-acetylserine. The ACB domain maps to 2-87 (SQAEFDKAAE…VEELKKKYGI (86 aa)). K8 carries the post-translational modification N6-acetyllysine; alternate. K8 is modified (N6-succinyllysine; alternate). K14 contributes to the an acyl-CoA binding site. K17 is modified (N6-succinyllysine). N6-acetyllysine is present on K19. Residue Y29 is modified to Phosphotyrosine. An acyl-CoA is bound by residues 29 to 33 (YSHYK), K51, K55, and Y74. At K51 the chain carries N6-acetyllysine. An N6-acetyllysine; alternate modification is found at K55. An N6-succinyllysine; alternate modification is found at K55. K55 is subject to N6-(2-hydroxyisobutyryl)lysine; alternate. N6-malonyllysine; alternate is present on K55. The residue at position 77 (K77) is an N6-acetyllysine; alternate. N6-succinyllysine; alternate is present on K77.

This sequence belongs to the ACBP family. As to quaternary structure, monomer.

The protein localises to the endoplasmic reticulum. Its subcellular location is the golgi apparatus. Binds medium- and long-chain acyl-CoA esters with very high affinity and may function as an intracellular carrier of acyl-CoA esters. It is also able to displace diazepam from the benzodiazepine (BZD) recognition site located on the GABA type A receptor. It is therefore possible that this protein also acts as a neuropeptide to modulate the action of the GABA receptor. The chain is Acyl-CoA-binding protein (DBI) from Bos taurus (Bovine).